The following is a 745-amino-acid chain: Protein PHOX1 (745 aa).

Residues 1-10 are compositionally biased toward basic residues; the sequence is MGKPTGKKKN. Positions 1-37 are disordered; that stretch reads MGKPTGKKKNNNYTEMPPTESSTTGGGKTGKSFDRSA. 3 TPR repeats span residues 52–85, 90–125, and 126–159; these read ALEL…LPRD, AYLR…SPRF, and SKAL…EPEN. The 80-residue stretch at 280–359 folds into the PB1 domain; sequence TRTVKLVHGD…GSFRLYIAEV (80 aa). 4 TPR repeats span residues 406 to 441, 443 to 472, 494 to 528, and 553 to 586; these read EHWI…YTEA, EDIV…AMFN, ETIL…KSDF, and GEVD…WEEM.

As to quaternary structure, interacts with myosin XI-1 and XI-K.

It is found in the cytoplasmic vesicle membrane. In terms of biological role, carboxylate clamp type tetratricopeptide repeat protein that may act as a potential Hsp90/Hsp70 co-chaperone. Contributes to polar growth of root hairs. This Arabidopsis thaliana (Mouse-ear cress) protein is Protein PHOX1.